Here is a 335-residue protein sequence, read N- to C-terminus: MAQTKPIAEQMAALNNSDDTSFAADRSNSLLNATCPARIQNSVDQRKINRSFNDSLSSGYSGKWLRPKREALKITPLAQIDEAPATKRHSSAKDKHTEYKTRLCDAFRREGYCPYNDNCTYAHGQDELRVPRRRQEYYSRDPPRERRDSRSRRDDVDTTINRSSSSASKHHDENRRPSNNHGSSNRRQICHNFERGNCRYGPRCRFIHVEQMQHFNANATVYAPPSSDCPPPIAYYHHHPQHQQQFLPFPMPYFLAPPPQAQQGAPFPVQYIPQQHDLMNSQPMYAPMAPTYYYQPINSNGMPMMDVTIDPNATGGAFEVFPDGFFSQPPPTIIS.

Residue Lys-68 forms a Glycyl lysine isopeptide (Lys-Gly) (interchain with G-Cter in SUMO) linkage. The C3H1-type 1 zinc finger occupies 98–126; it reads EYKTRLCDAFRREGYCPYNDNCTYAHGQD. Residues 130–156 are compositionally biased toward basic and acidic residues; sequence VPRRRQEYYSRDPPRERRDSRSRRDDV. The interval 130–188 is disordered; sequence VPRRRQEYYSRDPPRERRDSRSRRDDVDTTINRSSSSASKHHDENRRPSNNHGSSNRRQ. Composition is skewed to polar residues over residues 158-167 and 177-187; these read TTINRSSSSA and PSNNHGSSNRR. The C3H1-type 2 zinc finger occupies 184–211; the sequence is SNRRQICHNFERGNCRYGPRCRFIHVEQ. The segment at 288 to 291 is required for inhibition of Ser-2 phosphorylation; it reads MAPT.

In terms of assembly, interacts with hda-1, let-418 and mep-1. Interacts (via C terminus) with cit-1.1 (via C terminus). In terms of processing, sumoylated in adult germ cells.

The protein localises to the nucleus. The protein resides in the cytoplasm. Its subcellular location is the cytoskeleton. It localises to the microtubule organizing center. It is found in the centrosome. The protein localises to the spindle. The protein resides in the cytoplasmic granule. Maternally provided pie-1 is required for germline cell fate determination. Functions as a repressor of RNA polymerase II-dependent gene expression in the developing germline. Required for expression of nos-2 in P4 germline blastomere cells. Inhibits the histone deacetylase activity of hda-1. Represses transcriptional activation of cdk-9 and cit-1.1, which are members of the P-TEFb complex. Acts redundantly with gei-17 to promote piRNA-mediated silencing and fertility in adult germline. Promotes the sumoylation of hda-1 in adult animals but not in embryos thereby regulating its interaction with mep-1. This Caenorhabditis elegans protein is Pharynx and intestine in excess protein 1.